Here is a 62-residue protein sequence, read N- to C-terminus: Large ribosomal subunit protein eL37 (62 aa).

Zn(2+)-binding residues include Cys-20, Cys-23, Cys-35, and Cys-38. The C4-type zinc finger occupies 20–38 (CRRCGRHAFNVAKGYCAAC).

It belongs to the eukaryotic ribosomal protein eL37 family. It depends on Zn(2+) as a cofactor.

Functionally, binds to the 23S rRNA. This is Large ribosomal subunit protein eL37 from Staphylothermus marinus (strain ATCC 43588 / DSM 3639 / JCM 9404 / F1).